Consider the following 373-residue polypeptide: Cobalt-precorrin-5B C(1)-methyltransferase (373 aa).

This sequence belongs to the CbiD family.

The catalysed reaction is Co-precorrin-5B + S-adenosyl-L-methionine = Co-precorrin-6A + S-adenosyl-L-homocysteine. It functions in the pathway cofactor biosynthesis; adenosylcobalamin biosynthesis; cob(II)yrinate a,c-diamide from sirohydrochlorin (anaerobic route): step 6/10. Functionally, catalyzes the methylation of C-1 in cobalt-precorrin-5B to form cobalt-precorrin-6A. The sequence is that of Cobalt-precorrin-5B C(1)-methyltransferase from Listeria monocytogenes serovar 1/2a (strain ATCC BAA-679 / EGD-e).